We begin with the raw amino-acid sequence, 398 residues long: MSVDKIVLAYSGGLDTSVILKWLANEYECPVVAYSANIGQIEDWDAVKEKGMATGADKVIVSDLQKEFVEDYIFPAFRASAIYEGTYLLGTSLARPLISKEQVRIAHAEGANAVSHGATGKGNDQVRFELGYIGLDPSLQIIAPWRTWDLNSRTRLEEYAKQHNIPVPTTKKNPYSSDENLLHISFEGGILESPWNEPDPDMFKLTVSPEMAPDKPTYLEITFQNGDPIALDGVAMEPLELFRALNKVAGENAVGRLDLVENRFVGMKSRGVYETPGGTLLYHAHRDLETICLDREVMKIRDSLVPRYAELIYNGFWFSPERELLQMTMDTAQKTVSGVVRMKLYKGNCFSVGRKSDQSLYKEDFATFEADDVYDQGDATGFIRLNGLRLKINALQGK.

ATP is bound by residues 9-17 and Ala36; that span reads AYSGGLDTS. Positions 87 and 92 each coordinate L-citrulline. ATP is bound at residue Gly117. 3 residues coordinate L-aspartate: Thr119, Asn123, and Asp124. Asn123 is an L-citrulline binding site. The L-citrulline site is built by Arg127, Ser176, Ser185, Glu261, and Tyr273.

Belongs to the argininosuccinate synthase family. Type 1 subfamily. In terms of assembly, homotetramer.

It localises to the cytoplasm. The catalysed reaction is L-citrulline + L-aspartate + ATP = 2-(N(omega)-L-arginino)succinate + AMP + diphosphate + H(+). Its pathway is amino-acid biosynthesis; L-arginine biosynthesis; L-arginine from L-ornithine and carbamoyl phosphate: step 2/3. In Desulfotalea psychrophila (strain LSv54 / DSM 12343), this protein is Argininosuccinate synthase.